The primary structure comprises 88 residues: Small ribosomal subunit protein uS15 (88 aa).

The protein belongs to the universal ribosomal protein uS15 family. As to quaternary structure, part of the 30S ribosomal subunit. Forms a bridge to the 50S subunit in the 70S ribosome, contacting the 23S rRNA.

Its function is as follows. One of the primary rRNA binding proteins, it binds directly to 16S rRNA where it helps nucleate assembly of the platform of the 30S subunit by binding and bridging several RNA helices of the 16S rRNA. Forms an intersubunit bridge (bridge B4) with the 23S rRNA of the 50S subunit in the ribosome. The protein is Small ribosomal subunit protein uS15 of Geotalea uraniireducens (strain Rf4) (Geobacter uraniireducens).